The chain runs to 76 residues: Bowman-Birk type proteinase inhibitor DE-4 (76 aa).

Disulfide bonds link Cys15-Cys69, Cys16-Cys31, Cys19-Cys65, Cys21-Cys29, Cys39-Cys46, Cys43-Cys58, and Cys48-Cys56.

This sequence belongs to the Bowman-Birk serine protease inhibitor family.

The polypeptide is Bowman-Birk type proteinase inhibitor DE-4 (Macrotyloma axillare (Perennial horse gram)).